The following is a 105-amino-acid chain: Class II hydrophobin 1 (105 aa).

An N-terminal signal peptide occupies residues 1-15 (MQVLLIATLVASVLA). 4 disulfides stabilise this stretch: Cys-38-Cys-87, Cys-48-Cys-78, Cys-49-Cys-58, and Cys-88-Cys-99.

Belongs to the cerato-ulmin hydrophobin family. Homotetramer. Further self-assembles to form highly ordered films at water-air interfaces through intermolecular interactions.

It is found in the secreted. The protein resides in the cell wall. Aerial growth, conidiation, and dispersal of filamentous fungi in the environment rely upon a capability of their secreting small amphipathic proteins called hydrophobins (HPBs) with low sequence identity. Class I can self-assemble into an outermost layer of rodlet bundles on aerial cell surfaces, conferring cellular hydrophobicity that supports fungal growth, development and dispersal; whereas Class II form highly ordered films at water-air interfaces through intermolecular interactions but contribute nothing to the rodlet structure. HYD1 is a class II hydrophobin that plays roles in conidiation and cuticle-bypassing infection by regulating the transcripts of frequency clock protein frq, and velvet protein vosA, as well as primordium formation via the mitogen-activated protein kinase signaling pathway. Also participates in stress response, including tolerance of mycelia to osmotic and oxidative stresses, and conidia to high or low temperature. Acts as a defensive factor against Calcarisporium cordycipiticola infection, probably via the formation of a physical barrier to inhibit the pathogen infection owing to its hydrophobicity or binding to the effector of C.cordycipiticola, hindering the recognition of the pathogen. Finally, regulates the transcription of the AreA transcription factor at different developmental stages via a positive feedback loop. The polypeptide is Class II hydrophobin 1 (Cordyceps militaris (Caterpillar fungus)).